The sequence spans 150 residues: MKCPFCGGESRVLESRPASDEEAVRRRRECLACGRRFTTMERVEVPPLIVVKKDGRREPFNRDKLLTGVLKACEKRPVPMEVIEKLADDIERDLRSSLDREVPSVVIGERVMEALRQVDGVAYVRFASVYREFKDLNEFREQLEQLLKSR.

The segment at 3-33 is a zinc-finger region; that stretch reads CPFCGGESRVLESRPASDEEAVRRRRECLAC. The ATP-cone domain maps to 48-138; sequence LIVVKKDGRR…VYREFKDLNE (91 aa).

It belongs to the NrdR family. Requires Zn(2+) as cofactor.

In terms of biological role, negatively regulates transcription of bacterial ribonucleotide reductase nrd genes and operons by binding to NrdR-boxes. This Symbiobacterium thermophilum (strain DSM 24528 / JCM 14929 / IAM 14863 / T) protein is Transcriptional repressor NrdR.